We begin with the raw amino-acid sequence, 114 residues long: Ribonuclease P protein component (114 aa).

It belongs to the RnpA family. As to quaternary structure, consists of a catalytic RNA component (M1 or rnpB) and a protein subunit.

It carries out the reaction Endonucleolytic cleavage of RNA, removing 5'-extranucleotides from tRNA precursor.. Functionally, RNaseP catalyzes the removal of the 5'-leader sequence from pre-tRNA to produce the mature 5'-terminus. It can also cleave other RNA substrates such as 4.5S RNA. The protein component plays an auxiliary but essential role in vivo by binding to the 5'-leader sequence and broadening the substrate specificity of the ribozyme. This Clostridioides difficile (strain 630) (Peptoclostridium difficile) protein is Ribonuclease P protein component.